The chain runs to 69 residues: uncharacterized protein (69 aa).

This is an uncharacterized protein from Saccharomyces cerevisiae (strain ATCC 204508 / S288c) (Baker's yeast).